Reading from the N-terminus, the 356-residue chain is Glutamine synthetase cytosolic isozyme (356 aa).

Residues 19 to 99 enclose the GS beta-grasp domain; that stretch reads IIAEYIWIGG…VMCDAYTPAG (81 aa). The disordered stretch occupies residues 38–66; that stretch reads RTLPGPVTDPSQLPKWNYDGSSTGQAPGE. Residues 106–356 enclose the GS catalytic domain; it reads KRHAAAKIFS…IADTTILWKP (251 aa).

The protein belongs to the glutamine synthetase family. As to quaternary structure, homooctamer.

The protein resides in the cytoplasm. The enzyme catalyses L-glutamate + NH4(+) + ATP = L-glutamine + ADP + phosphate + H(+). The polypeptide is Glutamine synthetase cytosolic isozyme (Medicago sativa (Alfalfa)).